Consider the following 277-residue polypeptide: 4-hydroxy-3-methylbut-2-enyl diphosphate reductase (277 aa).

Residue Cys12 coordinates [4Fe-4S] cluster. (2E)-4-hydroxy-3-methylbut-2-enyl diphosphate-binding residues include His36 and His70. The dimethylallyl diphosphate site is built by His36 and His70. Residues His36 and His70 each contribute to the isopentenyl diphosphate site. Cys92 contributes to the [4Fe-4S] cluster binding site. Position 120 (His120) interacts with (2E)-4-hydroxy-3-methylbut-2-enyl diphosphate. A dimethylallyl diphosphate-binding site is contributed by His120. Residue His120 coordinates isopentenyl diphosphate. Catalysis depends on Glu122, which acts as the Proton donor. Position 160 (Thr160) interacts with (2E)-4-hydroxy-3-methylbut-2-enyl diphosphate. Cys188 serves as a coordination point for [4Fe-4S] cluster. 4 residues coordinate (2E)-4-hydroxy-3-methylbut-2-enyl diphosphate: Ser216, Ser217, Asn218, and Ser260. 4 residues coordinate dimethylallyl diphosphate: Ser216, Ser217, Asn218, and Ser260. Ser216, Ser217, Asn218, and Ser260 together coordinate isopentenyl diphosphate.

It belongs to the IspH family. Requires [4Fe-4S] cluster as cofactor.

The catalysed reaction is isopentenyl diphosphate + 2 oxidized [2Fe-2S]-[ferredoxin] + H2O = (2E)-4-hydroxy-3-methylbut-2-enyl diphosphate + 2 reduced [2Fe-2S]-[ferredoxin] + 2 H(+). It carries out the reaction dimethylallyl diphosphate + 2 oxidized [2Fe-2S]-[ferredoxin] + H2O = (2E)-4-hydroxy-3-methylbut-2-enyl diphosphate + 2 reduced [2Fe-2S]-[ferredoxin] + 2 H(+). It functions in the pathway isoprenoid biosynthesis; dimethylallyl diphosphate biosynthesis; dimethylallyl diphosphate from (2E)-4-hydroxy-3-methylbutenyl diphosphate: step 1/1. It participates in isoprenoid biosynthesis; isopentenyl diphosphate biosynthesis via DXP pathway; isopentenyl diphosphate from 1-deoxy-D-xylulose 5-phosphate: step 6/6. Catalyzes the conversion of 1-hydroxy-2-methyl-2-(E)-butenyl 4-diphosphate (HMBPP) into a mixture of isopentenyl diphosphate (IPP) and dimethylallyl diphosphate (DMAPP). Acts in the terminal step of the DOXP/MEP pathway for isoprenoid precursor biosynthesis. This Sulfurovum sp. (strain NBC37-1) protein is 4-hydroxy-3-methylbut-2-enyl diphosphate reductase.